Reading from the N-terminus, the 262-residue chain is Nitrilase (262 aa).

In terms of domain architecture, CN hydrolase spans 2–237 (VKVAYVQMNP…EEVGVAEIDL (236 aa)). The active-site Proton acceptor is the E42. K113 acts as the Proton donor in catalysis. C146 acts as the Nucleophile in catalysis. Residue 173–174 (VM) coordinates substrate.

This sequence belongs to the carbon-nitrogen hydrolase superfamily. Homodimer.

It catalyses the reaction a nitrile + 2 H2O = a carboxylate + NH4(+). Enzymatic activity is inhibited in the presence of acetone, methanol and metal ions such as Ag(2+) and Hg(2+). Is also inhibited by various thiol reagents such as DTNB, p-chloromercuribenzoate, p-hydroxymercuribenzoate, iodacetamide and iodacetate. EDTA has no influence on activity. Functionally, nitrilase that hydrolyzes preferentially aliphatic nitriles like malononitrile and fumaronitrile in vitro. These dinitriles are converted to the corresponding monoacid mononitriles, showing the enzyme is regioselective. Cannot hydrolyze compounds with a nitrile group bound to an aromatic ring or amino acid. Its biological role is unknown. This Pyrococcus abyssi (strain GE5 / Orsay) protein is Nitrilase.